A 408-amino-acid chain; its full sequence is Peptidase T (408 aa).

Zn(2+) is bound at residue H78. Residue D80 is part of the active site. D140 is a Zn(2+) binding site. E173 acts as the Proton acceptor in catalysis. The Zn(2+) site is built by E174, D196, and H379.

Belongs to the peptidase M20B family. Zn(2+) is required as a cofactor.

It is found in the cytoplasm. It catalyses the reaction Release of the N-terminal residue from a tripeptide.. Cleaves the N-terminal amino acid of tripeptides. The chain is Peptidase T from Citrobacter koseri (strain ATCC BAA-895 / CDC 4225-83 / SGSC4696).